The chain runs to 258 residues: Triosephosphate isomerase (258 aa).

Position 9–11 (9–11 (NWK)) interacts with substrate. The active-site Electrophile is His-95. Glu-167 (proton acceptor) is an active-site residue. Gly-173 and Ser-212 together coordinate substrate.

The protein belongs to the triosephosphate isomerase family. As to quaternary structure, homodimer.

The protein localises to the cytoplasm. The catalysed reaction is D-glyceraldehyde 3-phosphate = dihydroxyacetone phosphate. Its pathway is carbohydrate biosynthesis; gluconeogenesis. The protein operates within carbohydrate degradation; glycolysis; D-glyceraldehyde 3-phosphate from glycerone phosphate: step 1/1. Functionally, involved in the gluconeogenesis. Catalyzes stereospecifically the conversion of dihydroxyacetone phosphate (DHAP) to D-glyceraldehyde-3-phosphate (G3P). This is Triosephosphate isomerase from Blochmanniella pennsylvanica (strain BPEN).